We begin with the raw amino-acid sequence, 353 residues long: 3-deoxy-D-manno-octulosonic acid transferase (353 aa).

Glu-31 acts as the Proton acceptor in catalysis. CMP contacts are provided by residues 211–212, 247–249, and 273–276; these read PR, FGI, and NLLE.

It belongs to the glycosyltransferase group 1 family. Glycosyltransferase 30 subfamily. As to quaternary structure, can form homodimer, homotrimer and homotetramer.

Its subcellular location is the cell inner membrane. It catalyses the reaction lipid IVA (E. coli) + CMP-3-deoxy-beta-D-manno-octulosonate = alpha-Kdo-(2-&gt;6)-lipid IVA (E. coli) + CMP + H(+). It functions in the pathway bacterial outer membrane biogenesis; LPS core biosynthesis. Its function is as follows. Involved in lipopolysaccharide (LPS) biosynthesis. Catalyzes the transfer of a single 3-deoxy-D-manno-octulosonate (Kdo) residue from CMP-Kdo to lipid IV(A), the tetraacyldisaccharide-1,4'-bisphosphate precursor of lipid A. Is strictly monofunctional, i.e. is capable of adding only a single Kdo residue to the acceptor lipid. The chain is 3-deoxy-D-manno-octulosonic acid transferase (kdtA) from Aquifex aeolicus (strain VF5).